A 376-amino-acid chain; its full sequence is Alpha-2,8-sialyltransferase 8E (376 aa).

Residues 1–17 (MRYADPSANRDLLGNRT) are Cytoplasmic-facing. A helical; Signal-anchor for type II membrane protein membrane pass occupies residues 18–38 (LLFIFICAFALVTLLQQILYG). The Lumenal portion of the chain corresponds to 39-376 (RNYIKRYFEF…RVHTGTCSCC (338 aa)). Asparagine 56 and asparagine 96 each carry an N-linked (GlcNAc...) asparagine glycan. 2 disulfide bridges follow: cysteine 164–cysteine 313 and cysteine 178–cysteine 373. Substrate contacts are provided by residues asparagine 192 and 214-216 (NPS). Asparagine 241 and asparagine 284 each carry an N-linked (GlcNAc...) asparagine glycan. Position 300-302 (300-302 (STG)) interacts with substrate. Histidine 348 (proton donor/acceptor) is an active-site residue.

The protein belongs to the glycosyltransferase 29 family.

The protein localises to the golgi apparatus membrane. The enzyme catalyses a ganglioside GQ1c (d18:1(4E)) + CMP-N-acetyl-beta-neuraminate = a ganglioside GP1c (d18:1(4E)) + CMP + H(+). It functions in the pathway protein modification; protein glycosylation. In terms of biological role, involved in the synthesis of gangliosides GD1c, GT1a, GQ1b, GP1c and GT3 from GD1a, GT1b, GM1b and GD3 respectively. The sequence is that of Alpha-2,8-sialyltransferase 8E (ST8SIA5) from Pan troglodytes (Chimpanzee).